Consider the following 249-residue polypeptide: MSVKKQLERLSELGAYYHKNGWMPGTAGNLSIRIPEESGFWVSGSGLDKNLLNKRNFLYVDLESGKPVDSKNIKATKGLKPSAETSIHRAVYRALDGVGCGLHVHTLESNLICANTSKNEPIVLFELPAIEILKAYGIWEENPKVYVPIIYNFPNVQDISDCLEKYLKEYRPHVPFCIIEKHGITVWGKDAVQANRNLEATDFILKYMTSWKSFSYSGEPRKLSVSDVLGQDRREIFSVEFPVYPATFY.

Zn(2+) contacts are provided by His-103 and His-105.

The protein belongs to the aldolase class II family. MtnB subfamily. Requires Zn(2+) as cofactor.

The catalysed reaction is 5-(methylsulfanyl)-D-ribulose 1-phosphate = 5-methylsulfanyl-2,3-dioxopentyl phosphate + H2O. It participates in amino-acid biosynthesis; L-methionine biosynthesis via salvage pathway; L-methionine from S-methyl-5-thio-alpha-D-ribose 1-phosphate: step 2/6. Its function is as follows. Catalyzes the dehydration of methylthioribulose-1-phosphate (MTRu-1-P) into 2,3-diketo-5-methylthiopentyl-1-phosphate (DK-MTP-1-P). The protein is Methylthioribulose-1-phosphate dehydratase of Leptospira interrogans serogroup Icterohaemorrhagiae serovar Lai (strain 56601).